A 154-amino-acid chain; its full sequence is Deoxyuridine 5'-triphosphate nucleotidohydrolase (154 aa).

Substrate contacts are provided by residues 64 to 66 (RSG), N77, 81 to 83 (TID), and K91.

This sequence belongs to the dUTPase family. In terms of assembly, homotrimer. Mg(2+) serves as cofactor.

The catalysed reaction is dUTP + H2O = dUMP + diphosphate + H(+). It participates in pyrimidine metabolism; dUMP biosynthesis; dUMP from dCTP (dUTP route): step 2/2. Functionally, this enzyme is involved in nucleotide metabolism: it produces dUMP, the immediate precursor of thymidine nucleotides and it decreases the intracellular concentration of dUTP so that uracil cannot be incorporated into DNA. This is Deoxyuridine 5'-triphosphate nucleotidohydrolase from Mycobacterium bovis (strain BCG / Pasteur 1173P2).